A 186-amino-acid polypeptide reads, in one-letter code: Ribosome-recycling factor (186 aa).

It belongs to the RRF family.

It localises to the cytoplasm. Functionally, responsible for the release of ribosomes from messenger RNA at the termination of protein biosynthesis. May increase the efficiency of translation by recycling ribosomes from one round of translation to another. The sequence is that of Ribosome-recycling factor from Rickettsia akari (strain Hartford).